Reading from the N-terminus, the 650-residue chain is Primary amine oxidase 1 (650 aa).

The first 19 residues, Met1–Gly19, serve as a signal peptide directing secretion. N-linked (GlcNAc...) asparagine glycosylation is found at Asn2, Asn34, Asn62, and Asn149. A disulfide bridge connects residues Cys155 and Cys176. Asn235 is a glycosylation site (N-linked (GlcNAc...) asparagine). Phe308 to Ser319 provides a ligand contact to substrate. Residue Asp310 is the Proton acceptor of the active site. The cysteines at positions 329 and 355 are disulfide-linked. Leu395–Tyr400 is a binding site for substrate. Tyr398 serves as the catalytic Schiff-base intermediate with substrate; via topaquinone. Tyr398 bears the 2',4',5'-topaquinone mark. Positions 453 and 455 each coordinate Cu cation. Positions 462 and 464 each coordinate Mn(2+). N-linked (GlcNAc...) asparagine glycosylation is present at Asn486. Positions 607 and 608 each coordinate Mn(2+). His618 is a Cu cation binding site.

The protein belongs to the copper/topaquinone oxidase family. As to quaternary structure, homodimer. Requires L-topaquinone as cofactor. Cu cation serves as cofactor. It depends on Zn(2+) as a cofactor. Mn(2+) is required as a cofactor. Post-translationally, topaquinone (TPQ) is generated by copper-dependent autoxidation of a specific tyrosyl residue. As to expression, expressed in the vascular tissues at the division/differentiation transition zone.

The protein localises to the secreted. The catalysed reaction is a primary methyl amine + O2 + H2O = an aldehyde + H2O2 + NH4(+). With respect to regulation, repressed by semi-carbazide, a specific and irreversible inhibitor of copper amine oxidases. Oxidizes preferentially the aliphatic diamine putrescine with production of the corresponding aldehyde, ammonia and hydrogen peroxide. May be involved in the regulation of developmental programmed cell death (PCD) in both vascular tissue and the root cap. Required for jasmonic acid-(MeJA) mediated early protoxylem differentiation associated with putrescine levels reduction and H(2)O(2) accumulation in roots. This is Primary amine oxidase 1 from Arabidopsis thaliana (Mouse-ear cress).